The sequence spans 221 residues: Phosphoribosylformylglycinamidine synthase subunit PurQ (221 aa).

In terms of domain architecture, Glutamine amidotransferase type-1 spans 8–221; that stretch reads NVGIIRFPGT…GLKFFKSFLD (214 aa). Catalysis depends on Cys-91, which acts as the Nucleophile. Catalysis depends on residues His-198 and Glu-200.

Part of the FGAM synthase complex composed of 1 PurL, 1 PurQ and 2 PurS subunits.

It localises to the cytoplasm. The catalysed reaction is N(2)-formyl-N(1)-(5-phospho-beta-D-ribosyl)glycinamide + L-glutamine + ATP + H2O = 2-formamido-N(1)-(5-O-phospho-beta-D-ribosyl)acetamidine + L-glutamate + ADP + phosphate + H(+). The enzyme catalyses L-glutamine + H2O = L-glutamate + NH4(+). It functions in the pathway purine metabolism; IMP biosynthesis via de novo pathway; 5-amino-1-(5-phospho-D-ribosyl)imidazole from N(2)-formyl-N(1)-(5-phospho-D-ribosyl)glycinamide: step 1/2. Part of the phosphoribosylformylglycinamidine synthase complex involved in the purines biosynthetic pathway. Catalyzes the ATP-dependent conversion of formylglycinamide ribonucleotide (FGAR) and glutamine to yield formylglycinamidine ribonucleotide (FGAM) and glutamate. The FGAM synthase complex is composed of three subunits. PurQ produces an ammonia molecule by converting glutamine to glutamate. PurL transfers the ammonia molecule to FGAR to form FGAM in an ATP-dependent manner. PurS interacts with PurQ and PurL and is thought to assist in the transfer of the ammonia molecule from PurQ to PurL. This is Phosphoribosylformylglycinamidine synthase subunit PurQ from Methanosphaera stadtmanae (strain ATCC 43021 / DSM 3091 / JCM 11832 / MCB-3).